The sequence spans 667 residues: DNA ligase (667 aa).

Residues 32 to 36, 81 to 82, and Glu-110 contribute to the NAD(+) site; these read DSEYD and SL. Lys-112 functions as the N6-AMP-lysine intermediate in the catalytic mechanism. NAD(+) contacts are provided by Arg-133, Glu-167, Lys-283, and Lys-307. Zn(2+) contacts are provided by Cys-401, Cys-404, Cys-419, and Cys-424. The region spanning 586 to 667 is the BRCT domain; that stretch reads EGHPEFSGKT…FVDKQNELNS (82 aa).

Belongs to the NAD-dependent DNA ligase family. LigA subfamily. The cofactor is Mg(2+). Requires Mn(2+) as cofactor.

The catalysed reaction is NAD(+) + (deoxyribonucleotide)n-3'-hydroxyl + 5'-phospho-(deoxyribonucleotide)m = (deoxyribonucleotide)n+m + AMP + beta-nicotinamide D-nucleotide.. DNA ligase that catalyzes the formation of phosphodiester linkages between 5'-phosphoryl and 3'-hydroxyl groups in double-stranded DNA using NAD as a coenzyme and as the energy source for the reaction. It is essential for DNA replication and repair of damaged DNA. The sequence is that of DNA ligase from Staphylococcus aureus (strain MRSA252).